The sequence spans 377 residues: Spermidine/putrescine import ATP-binding protein PotA (377 aa).

An ABC transporter domain is found at 22–252 (VRLQNVTKRF…PANRFVADFI (231 aa)). An ATP-binding site is contributed by 54–61 (GPSGCGKT).

The protein belongs to the ABC transporter superfamily. Spermidine/putrescine importer (TC 3.A.1.11.1) family. The complex is composed of two ATP-binding proteins (PotA), two transmembrane proteins (PotB and PotC) and a solute-binding protein (PotD).

It localises to the cell membrane. It catalyses the reaction ATP + H2O + polyamine-[polyamine-binding protein]Side 1 = ADP + phosphate + polyamineSide 2 + [polyamine-binding protein]Side 1.. In terms of biological role, part of the ABC transporter complex PotABCD involved in spermidine/putrescine import. Responsible for energy coupling to the transport system. The protein is Spermidine/putrescine import ATP-binding protein PotA of Rubrobacter xylanophilus (strain DSM 9941 / JCM 11954 / NBRC 16129 / PRD-1).